The sequence spans 298 residues: Glutamyl-Q tRNA(Asp) synthetase (298 aa).

L-glutamate-binding positions include 9–13 (RFAPS) and glutamate 45. The short motif at 12–22 (PSPSGELHFGS) is the 'HIGH' region element. Positions 101, 103, 115, and 119 each coordinate Zn(2+). L-glutamate-binding residues include tyrosine 172 and arginine 190. The 'KMSKS' region signature appears at 228 to 232 (KLSKQ). Residue lysine 231 coordinates ATP.

This sequence belongs to the class-I aminoacyl-tRNA synthetase family. GluQ subfamily. Zn(2+) serves as cofactor.

Catalyzes the tRNA-independent activation of glutamate in presence of ATP and the subsequent transfer of glutamate onto a tRNA(Asp). Glutamate is transferred on the 2-amino-5-(4,5-dihydroxy-2-cyclopenten-1-yl) moiety of the queuosine in the wobble position of the QUC anticodon. The polypeptide is Glutamyl-Q tRNA(Asp) synthetase (Citrobacter koseri (strain ATCC BAA-895 / CDC 4225-83 / SGSC4696)).